Here is a 264-residue protein sequence, read N- to C-terminus: uncharacterized protein (264 aa).

The next 6 helical transmembrane spans lie at 23–43 (LIFLAPFSLFTQIFMVITALI), 59–79 (FDTFTYQSNSLAIFLVWYYFL), 91–111 (LVLSVTGYLVFTVIFFNFYAL), 150–170 (FSELLLHVIHPLFYFIYVGLL), 190–210 (AGIYPSIYAFYLQTIPFLNVW), and 233–253 (WIWSIPIFASMFLILWMLFVI).

It is found in the cell membrane. This is an uncharacterized protein from Mycoplasma genitalium (strain ATCC 33530 / DSM 19775 / NCTC 10195 / G37) (Mycoplasmoides genitalium).